A 278-amino-acid polypeptide reads, in one-letter code: Large ribosomal subunit protein uL2 (278 aa).

Disordered regions lie at residues 1 to 20, 25 to 58, and 223 to 278; these read MGIR…SVSD, TRST…GGGH, and GVVM…GKKR. The span at 37-58 shows a compositional bias: basic residues; it reads LHGKGGRNAHGRITTRHKGGGH. Over residues 253-268 the composition is skewed to basic and acidic residues; that stretch reads PEGRTRKPNKPSDKLI. Residues 269-278 show a composition bias toward basic residues; it reads VRRRRTGKKR.

This sequence belongs to the universal ribosomal protein uL2 family. Part of the 50S ribosomal subunit. Forms a bridge to the 30S subunit in the 70S ribosome.

One of the primary rRNA binding proteins. Required for association of the 30S and 50S subunits to form the 70S ribosome, for tRNA binding and peptide bond formation. It has been suggested to have peptidyltransferase activity; this is somewhat controversial. Makes several contacts with the 16S rRNA in the 70S ribosome. This is Large ribosomal subunit protein uL2 from Mycolicibacterium smegmatis (strain ATCC 700084 / mc(2)155) (Mycobacterium smegmatis).